The chain runs to 161 residues: 2-C-methyl-D-erythritol 2,4-cyclodiphosphate synthase (161 aa).

A divalent metal cation-binding residues include D9 and H11. 4-CDP-2-C-methyl-D-erythritol 2-phosphate-binding positions include 9 to 11 (DFH) and 37 to 38 (HS). H45 contributes to the a divalent metal cation binding site. Residues 59–61 (DIG), 64–68 (FPDTD), 135–138 (TTTE), and R145 contribute to the 4-CDP-2-C-methyl-D-erythritol 2-phosphate site.

This sequence belongs to the IspF family. In terms of assembly, homotrimer. A divalent metal cation is required as a cofactor.

It catalyses the reaction 4-CDP-2-C-methyl-D-erythritol 2-phosphate = 2-C-methyl-D-erythritol 2,4-cyclic diphosphate + CMP. Its pathway is isoprenoid biosynthesis; isopentenyl diphosphate biosynthesis via DXP pathway; isopentenyl diphosphate from 1-deoxy-D-xylulose 5-phosphate: step 4/6. Its function is as follows. Involved in the biosynthesis of isopentenyl diphosphate (IPP) and dimethylallyl diphosphate (DMAPP), two major building blocks of isoprenoid compounds. Catalyzes the conversion of 4-diphosphocytidyl-2-C-methyl-D-erythritol 2-phosphate (CDP-ME2P) to 2-C-methyl-D-erythritol 2,4-cyclodiphosphate (ME-CPP) with a corresponding release of cytidine 5-monophosphate (CMP). This is 2-C-methyl-D-erythritol 2,4-cyclodiphosphate synthase from Leptospira borgpetersenii serovar Hardjo-bovis (strain JB197).